A 379-amino-acid polypeptide reads, in one-letter code: Flagellar P-ring protein (379 aa).

The signal sequence occupies residues 1 to 32 (MTAPAGFLPRVGRLIAVALTAVFLLAPTGAEA).

The protein belongs to the FlgI family. In terms of assembly, the basal body constitutes a major portion of the flagellar organelle and consists of four rings (L,P,S, and M) mounted on a central rod.

Its subcellular location is the periplasm. It is found in the bacterial flagellum basal body. Its function is as follows. Assembles around the rod to form the L-ring and probably protects the motor/basal body from shearing forces during rotation. In Rhodospirillum rubrum (strain ATCC 11170 / ATH 1.1.1 / DSM 467 / LMG 4362 / NCIMB 8255 / S1), this protein is Flagellar P-ring protein.